The following is a 1171-amino-acid chain: Protein WWC2 (1171 aa).

2 consecutive WW domains span residues 9–42 (LPLP…DPRD) and 56–89 (NELP…DPRK). Coiled coils occupy residues 120–193 (KEQR…YKEQ), 223–257 (ELKS…LEEA), and 301–420 (LAEK…KSAT). 2 disordered regions span residues 521–552 (SPTA…LSPP) and 603–637 (QALA…KNPD). Over residues 534-551 (PKSVTSLSSLSSLSSLSP) the composition is skewed to low complexity. Composition is skewed to basic and acidic residues over residues 606-616 (AERKSTGEGLR) and 625-637 (GRTD…KNPD). Residues 684–806 (GAAQAQLILR…FSNDVHTQWY (123 aa)) enclose the C2 domain. Coiled coils occupy residues 836–870 (LDLD…EQLC) and 1047–1123 (DLEL…NAEK).

The protein belongs to the WWC family.

Its subcellular location is the cytoplasm. The protein localises to the cytosol. Functionally, negative regulator of the Hippo signaling pathway, also known as the Salvador-Warts-Hippo (SWH) pathway. The chain is Protein WWC2 (wwc2) from Xenopus tropicalis (Western clawed frog).